We begin with the raw amino-acid sequence, 265 residues long: Glutamate racemase (265 aa).

Substrate-binding positions include 12 to 13 (DS) and 44 to 45 (YG). The active-site Proton donor/acceptor is the C75. 76–77 (NT) provides a ligand contact to substrate. Residue C186 is the Proton donor/acceptor of the active site. Position 187 to 188 (187 to 188 (TH)) interacts with substrate.

The protein belongs to the aspartate/glutamate racemases family.

The catalysed reaction is L-glutamate = D-glutamate. The protein operates within cell wall biogenesis; peptidoglycan biosynthesis. Provides the (R)-glutamate required for cell wall biosynthesis. This is Glutamate racemase from Pseudomonas putida (strain ATCC 700007 / DSM 6899 / JCM 31910 / BCRC 17059 / LMG 24140 / F1).